A 251-amino-acid chain; its full sequence is Mlc titration factor A (251 aa).

Residues H111, H148, H152, and E211 each contribute to the Zn(2+) site.

It belongs to the MtfA family. Interacts with Mlc. Zn(2+) serves as cofactor.

The protein localises to the cytoplasm. Involved in the modulation of the activity of the glucose-phosphotransferase system (glucose-PTS). Interacts with the transcriptional repressor Mlc, preventing its interaction with DNA and leading to the modulation of expression of genes regulated by Mlc, including ptsG, which encodes the PTS system glucose-specific EIICB component. In terms of biological role, shows zinc-dependent metallopeptidase activity. The protein is Mlc titration factor A of Salmonella arizonae (strain ATCC BAA-731 / CDC346-86 / RSK2980).